A 151-amino-acid polypeptide reads, in one-letter code: UPF0178 protein VSAL_I0701 (151 aa).

It belongs to the UPF0178 family.

In Aliivibrio salmonicida (strain LFI1238) (Vibrio salmonicida (strain LFI1238)), this protein is UPF0178 protein VSAL_I0701.